The primary structure comprises 259 residues: Cobalt transport protein CbiM (259 aa).

A signal peptide spans 1–25 (MFRRTTWLTLYLLLAMAALARPAFA). Transmembrane regions (helical) follow at residues 31–51 (GFLP…FWIW), 68–88 (MLLG…LPSV), 100–120 (LGAV…VLLF), 132–152 (TLGA…YGLY), 160–180 (GSMP…TYVT), and 206–226 (IFAV…VIVF).

Belongs to the CbiM family. As to quaternary structure, forms an energy-coupling factor (ECF) transporter complex composed of an ATP-binding protein (A component, CbiO), a transmembrane protein (T component, CbiQ) and 2 possible substrate-capture proteins (S components, CbiM and CbiN) of unknown stoichimetry.

It localises to the cell membrane. The protein operates within cofactor biosynthesis; adenosylcobalamin biosynthesis. Functionally, part of the energy-coupling factor (ECF) transporter complex CbiMNOQ involved in cobalt import. The chain is Cobalt transport protein CbiM from Moorella thermoacetica (strain ATCC 39073 / JCM 9320).